Here is a 257-residue protein sequence, read N- to C-terminus: uncharacterized protein (257 aa).

The chain crosses the membrane as a helical span at residues 7-27 (LFLCVSFLLITIFIGGGGFMN).

The protein belongs to the staphylococcal tandem lipoprotein family.

Its subcellular location is the cell membrane. This is an uncharacterized protein from Staphylococcus epidermidis (strain ATCC 12228 / FDA PCI 1200).